A 2153-amino-acid polypeptide reads, in one-letter code: Non-reducing polyketide synthase albA (2153 aa).

The tract at residues Y8–H244 is N-terminal acylcarrier protein transacylase domain (SAT). The Ketosynthase family 3 (KS3) domain maps to N375 to D806. Residues C547, H682, and H724 each act as for beta-ketoacyl synthase activity in the active site. Residues F912–D1232 are malonyl-CoA:ACP transacylase (MAT) domain. The active-site For acyl/malonyl transferase activity is the S1001. An N-terminal hotdog fold region spans residues H1286–A1425. The region spanning H1286–D1598 is the PKS/mFAS DH domain. The interval T1290–P1603 is product template (PT) domain. Catalysis depends on H1326, which acts as the Proton acceptor; for dehydratase activity. The segment at D1452–D1598 is C-terminal hotdog fold. D1511 (proton donor; for dehydratase activity) is an active-site residue. A disordered region spans residues K1608–P1643. Low complexity predominate over residues P1610–P1643. Positions P1643–S1720 constitute a Carrier 1 domain. S1680 carries the O-(pantetheine 4'-phosphoryl)serine modification. Positions S1720–E1765 are disordered. A compositionally biased stretch (low complexity) spans S1725–S1748. Over residues A1749 to E1765 the composition is skewed to polar residues. The Carrier 2 domain maps to V1764–P1841. At S1801 the chain carries O-(pantetheine 4'-phosphoryl)serine. Residues S1879–M2151 are claisen cyclase domain. Residue S1969 is the For Claisen cyclase activity of the active site.

The catalysed reaction is 6 malonyl-CoA + acetyl-CoA + 6 H(+) = naphtopyrone YWA1 + 6 CO2 + 7 CoA + H2O. The protein operates within secondary metabolite biosynthesis. In terms of biological role, non-reducing polyketide synthase; part of the gene cluster that mediates the biosynthesis of aurasperone B, a dimeric gamma-naphthopyrone. The first step in the biosynthesis of aurasperone B is the production of gamma-naphthopyrone precursor YWA1 by the non-reducing polyketide synthase albA, via condensation of one acetyl-CoA starter unit with 6 malonyl-CoA units. YWA1 is then methylated by aunE at position C-6 to yield foncesin which is further methylated at position C-8 by aunD to produce fonsecin B. A key enzyme in the biosynthetic pathway is the cytochrome P450 monooxygenase aunB which catalyzes the oxidative dimerization of fonsecin B to aurasperone B. AunB also catalyzes the oxidative dimerization of rubrofusarin B into aurasperone A. In Aspergillus niger (strain ATCC MYA-4892 / CBS 513.88 / FGSC A1513), this protein is Non-reducing polyketide synthase albA.